Consider the following 86-residue polypeptide: Large ribosomal subunit protein bL31 (86 aa).

The interval 65–86 (YGMASSDSSEQKDKSSEEKKES) is disordered. Residues 73 to 86 (SEQKDKSSEEKKES) show a composition bias toward basic and acidic residues.

Belongs to the bacterial ribosomal protein bL31 family. Type A subfamily. In terms of assembly, part of the 50S ribosomal subunit.

Functionally, binds the 23S rRNA. The protein is Large ribosomal subunit protein bL31 of Prochlorococcus marinus (strain NATL2A).